A 696-amino-acid polypeptide reads, in one-letter code: GPI mannosyltransferase 4 (696 aa).

The next 6 membrane-spanning stretches (helical) occupy residues 100–120 (WQLE…IYTL), 125–142 (NDYC…RFEI), 149–169 (SSWI…EMAM), 185–205 (NTVV…ESIS), 227–247 (AMST…LFGA), and 338–358 (YVHL…ASLG).

This sequence belongs to the glycosyltransferase 22 family. PIGZ subfamily.

The protein localises to the endoplasmic reticulum membrane. It participates in glycolipid biosynthesis; glycosylphosphatidylinositol-anchor biosynthesis. Its function is as follows. Mannosyltransferase involved in glycosylphosphatidylinositol-anchor biosynthesis. Transfers a fourth mannose to some trimannosyl-GPIs during GPI precursor assembly. The chain is GPI mannosyltransferase 4 from Drosophila melanogaster (Fruit fly).